The chain runs to 489 residues: Glutamyl-tRNA(Gln) amidotransferase subunit A (489 aa).

Catalysis depends on charge relay system residues K80 and S160. S184 functions as the Acyl-ester intermediate in the catalytic mechanism.

This sequence belongs to the amidase family. GatA subfamily. Heterotrimer of A, B and C subunits.

The catalysed reaction is L-glutamyl-tRNA(Gln) + L-glutamine + ATP + H2O = L-glutaminyl-tRNA(Gln) + L-glutamate + ADP + phosphate + H(+). Functionally, allows the formation of correctly charged Gln-tRNA(Gln) through the transamidation of misacylated Glu-tRNA(Gln) in organisms which lack glutaminyl-tRNA synthetase. The reaction takes place in the presence of glutamine and ATP through an activated gamma-phospho-Glu-tRNA(Gln). This chain is Glutamyl-tRNA(Gln) amidotransferase subunit A, found in Wolbachia pipientis wMel.